The chain runs to 475 residues: Ribulose bisphosphate carboxylase large chain (475 aa).

A propeptide spanning residues Met1–Ser2 is cleaved from the precursor. Pro3 is modified (N-acetylproline). At Lys14 the chain carries N6,N6,N6-trimethyllysine. Residues Asn123 and Thr173 each contribute to the substrate site. Catalysis depends on Lys175, which acts as the Proton acceptor. Lys177 contacts substrate. Lys201, Asp203, and Glu204 together coordinate Mg(2+). Position 201 is an N6-carboxylysine (Lys201). Catalysis depends on His294, which acts as the Proton acceptor. Arg295, His327, and Ser379 together coordinate substrate.

The protein belongs to the RuBisCO large chain family. Type I subfamily. Heterohexadecamer of 8 large chains and 8 small chains; disulfide-linked. The disulfide link is formed within the large subunit homodimers. Mg(2+) is required as a cofactor. In terms of processing, the disulfide bond which can form in the large chain dimeric partners within the hexadecamer appears to be associated with oxidative stress and protein turnover.

It localises to the plastid. The protein localises to the chloroplast. It catalyses the reaction 2 (2R)-3-phosphoglycerate + 2 H(+) = D-ribulose 1,5-bisphosphate + CO2 + H2O. The enzyme catalyses D-ribulose 1,5-bisphosphate + O2 = 2-phosphoglycolate + (2R)-3-phosphoglycerate + 2 H(+). In terms of biological role, ruBisCO catalyzes two reactions: the carboxylation of D-ribulose 1,5-bisphosphate, the primary event in carbon dioxide fixation, as well as the oxidative fragmentation of the pentose substrate in the photorespiration process. Both reactions occur simultaneously and in competition at the same active site. This chain is Ribulose bisphosphate carboxylase large chain, found in Chloranthus spicatus (Chulantree).